Here is a 275-residue protein sequence, read N- to C-terminus: Putative ABC transporter permease protein ORF2 (275 aa).

Helical transmembrane passes span 11-31, 74-94, 108-128, 136-156, 185-205, and 239-259; these read YFIF…FMLF, IAVS…AFAF, LIIA…YVLT, TVFA…IFIL, ILLP…GTYL, and IPAI…AYIF. The 192-residue stretch at 69 to 260 folds into the ABC transmembrane type-1 domain; that stretch reads LKNSVIAVSI…LPMLIAYIFG (192 aa).

This sequence belongs to the binding-protein-dependent transport system permease family. MalFG subfamily.

It is found in the cell membrane. The chain is Putative ABC transporter permease protein ORF2 from Caldicellulosiruptor sp. (strain Rt8B.4).